A 246-amino-acid chain; its full sequence is Transcription factor A, mitochondrial (246 aa).

Residues 1 to 42 (MAFLRSMWGVLSALGRSGAELCTGCGSRLRSPFSFVYLPRWF) constitute a mitochondrion transit peptide. Residues 50 to 118 (PKKPVSSYLR…VYKEEISRFK (69 aa)) constitute a DNA-binding region (HMG box 1). Residues serine 55, serine 56, and serine 61 each carry the phosphoserine; by PKA modification. Residue threonine 122 is modified to Phosphothreonine. The HMG box 2 DNA-binding region spans 155–219 (PKRPRSAYNV…RYHNEMKSWE (65 aa)). At serine 160 the chain carries Phosphoserine; by PKA. 2 positions are modified to phosphoserine: serine 193 and serine 195.

As to quaternary structure, monomer; binds DNA as a monomer. Homodimer. Component of the mitochondrial transcription initiation complex, composed at least of TFB2M, TFAM and POLRMT. In this complex TFAM recruits POLRMT to the promoter whereas TFB2M induces structural changes in POLRMT to enable promoter opening and trapping of the DNA non-template strand. Upon metabolic stress, forms a complex composed of FOXO3, SIRT3, TFAM and POLRMT. Interacts with TFB1M and TFB2M. Interacts with CLPX; this enhances DNA-binding. Phosphorylation by PKA within the HMG box 1 impairs DNA binding and promotes degradation by the AAA+ Lon protease.

It is found in the mitochondrion. It localises to the mitochondrion matrix. Its subcellular location is the mitochondrion nucleoid. Its function is as follows. Binds to the mitochondrial light strand promoter and functions in mitochondrial transcription regulation. Component of the mitochondrial transcription initiation complex, composed at least of TFB2M, TFAM and POLRMT that is required for basal transcription of mitochondrial DNA. In this complex, TFAM recruits POLRMT to a specific promoter whereas TFB2M induces structural changes in POLRMT to enable promoter opening and trapping of the DNA non-template strand. Required for accurate and efficient promoter recognition by the mitochondrial RNA polymerase. Promotes transcription initiation from the HSP1 and the light strand promoter by binding immediately upstream of transcriptional start sites. Is able to unwind DNA. Bends the mitochondrial light strand promoter DNA into a U-turn shape via its HMG boxes. Required for maintenance of normal levels of mitochondrial DNA. May play a role in organizing and compacting mitochondrial DNA. This Homo sapiens (Human) protein is Transcription factor A, mitochondrial.